The primary structure comprises 202 residues: Ribonuclease HII (202 aa).

Residues 1–195 (MIVAGVDEVG…PELKGGSPAG (195 aa)) form the RNase H type-2 domain. Positions 7, 8, and 103 each coordinate a divalent metal cation.

This sequence belongs to the RNase HII family. Requires Mn(2+) as cofactor. The cofactor is Mg(2+).

It is found in the cytoplasm. The enzyme catalyses Endonucleolytic cleavage to 5'-phosphomonoester.. Its function is as follows. Endonuclease that specifically degrades the RNA of RNA-DNA hybrids. This is Ribonuclease HII from Synechococcus sp. (strain RCC307).